Consider the following 199-residue polypeptide: MATYARSVERLIAELSRLPTIGPRSAQRIAFHIIRTRKEEALALAEALREVKERIRPCRRCFNLTEGEECDICRDPRRDRSVICVVEDPYDIGPIERTGEYRGLYHVLGGALSPLDGVEPEDLRIAELVERVRSEGTRELILATNPNTTGEATAMFIAQEVRELPVRVTALASGLPVGGDLEYADEVTLGRAFAGRREL.

A C4-type zinc finger spans residues 58–73 (CRRCFNLTEGEECDIC). The region spanning 81–176 (SVICVVEDPY…RVTALASGLP (96 aa)) is the Toprim domain.

The protein belongs to the RecR family.

In terms of biological role, may play a role in DNA repair. It seems to be involved in an RecBC-independent recombinational process of DNA repair. It may act with RecF and RecO. The sequence is that of Recombination protein RecR from Rubrobacter xylanophilus (strain DSM 9941 / JCM 11954 / NBRC 16129 / PRD-1).